The sequence spans 330 residues: Glycerol-3-phosphate dehydrogenase [NAD(P)+] (330 aa).

The NADPH site is built by S11, F12, R32, and K106. Sn-glycerol 3-phosphate contacts are provided by K106, G133, and S135. A137 contacts NADPH. Residues K188, D241, S251, R252, and N253 each contribute to the sn-glycerol 3-phosphate site. Residue K188 is the Proton acceptor of the active site. Residue R252 coordinates NADPH. V276 and E278 together coordinate NADPH.

It belongs to the NAD-dependent glycerol-3-phosphate dehydrogenase family.

Its subcellular location is the cytoplasm. The catalysed reaction is sn-glycerol 3-phosphate + NAD(+) = dihydroxyacetone phosphate + NADH + H(+). It carries out the reaction sn-glycerol 3-phosphate + NADP(+) = dihydroxyacetone phosphate + NADPH + H(+). The protein operates within membrane lipid metabolism; glycerophospholipid metabolism. Catalyzes the reduction of the glycolytic intermediate dihydroxyacetone phosphate (DHAP) to sn-glycerol 3-phosphate (G3P), the key precursor for phospholipid synthesis. This Clostridium botulinum (strain Eklund 17B / Type B) protein is Glycerol-3-phosphate dehydrogenase [NAD(P)+].